A 525-amino-acid chain; its full sequence is uncharacterized protein (525 aa).

6 consecutive transmembrane segments (helical) span residues 7–29 (FLATHQLLTILIVLASGALLGQI), 34–51 (LRFGAAGALFMGLVVGAL), 64–82 (GLGVVLFCYTVGLAAGSTF), 92–114 (LMLAGVVGLAVMAAAGLGLGRLF), 121–143 (VAGLYAGVLTSPAIDAASMATHG), and 148–170 (LVGYALSYPVGVVVGLIMVAIIA). RCK C-terminal domains follow at residues 178-257 (KDNT…LGHV) and 259-341 (ERTL…LFGD). 5 helical membrane-spanning segments follow: residues 351 to 370 (ALSLGLGAALGLLLGALMVA), 374 to 396 (GLQFELGTAAGPLVMGMILGSIH), 416 to 438 (LGLMIFLACVGLASGPAFLSQAV), 443 to 465 (LAVIAVSAVTLVLGGAIVIAAAW), and 502 to 524 (SAYGALFALGTVVKILLVQVIVL).

The protein belongs to the AAE transporter (TC 2.A.81) family.

It localises to the cell membrane. This is an uncharacterized protein from Cutibacterium acnes (strain DSM 16379 / KPA171202) (Propionibacterium acnes).